We begin with the raw amino-acid sequence, 365 residues long: tRNA dimethylallyltransferase (365 aa).

23–30 (APTASGKT) contacts ATP. 25 to 30 (TASGKT) lines the substrate pocket. Interaction with substrate tRNA stretches follow at residues 48–51 (DSAL), 172–176 (QRITR), and 256–261 (RCVGYR).

It belongs to the IPP transferase family. As to quaternary structure, monomer. Mg(2+) serves as cofactor.

It carries out the reaction adenosine(37) in tRNA + dimethylallyl diphosphate = N(6)-dimethylallyladenosine(37) in tRNA + diphosphate. In terms of biological role, catalyzes the transfer of a dimethylallyl group onto the adenine at position 37 in tRNAs that read codons beginning with uridine, leading to the formation of N6-(dimethylallyl)adenosine (i(6)A). In Psychrobacter sp. (strain PRwf-1), this protein is tRNA dimethylallyltransferase.